A 225-amino-acid chain; its full sequence is UPF0502 protein Ajs_3392 (225 aa).

It belongs to the UPF0502 family.

The protein is UPF0502 protein Ajs_3392 of Acidovorax sp. (strain JS42).